Reading from the N-terminus, the 361-residue chain is Caffeic acid 3-O-methyltransferase 1 (361 aa).

128–134 (MNQDKVL) is a binding site for substrate. The tract at residues 160 to 178 (AFEYHGTDPRFNKVFNQGM) is substrate binding. Residues glycine 206, aspartate 229, aspartate 249, methionine 250, and lysine 263 each contribute to the S-adenosyl-L-methionine site. The active-site Proton acceptor is the histidine 267.

It belongs to the class I-like SAM-binding methyltransferase superfamily. Cation-independent O-methyltransferase family. COMT subfamily. In terms of assembly, homodimer.

It catalyses the reaction (E)-caffeate + S-adenosyl-L-methionine = (E)-ferulate + S-adenosyl-L-homocysteine + H(+). The protein operates within aromatic compound metabolism; phenylpropanoid biosynthesis. Catalyzes the conversion of caffeic acid to ferulic acid and of 5-hydroxyferulic acid to sinapic acid. The resulting products may subsequently be converted to the corresponding alcohols that are incorporated into lignins. This Ocimum basilicum (Sweet basil) protein is Caffeic acid 3-O-methyltransferase 1 (COMT1).